The primary structure comprises 262 residues: uncharacterized protein (262 aa).

A divalent metal cation contacts are provided by histidine 7, histidine 9, glutamate 98, histidine 138, histidine 162, and aspartate 212.

The protein belongs to the metallo-dependent hydrolases superfamily. TatD-type hydrolase family. A divalent metal cation serves as cofactor.

This is an uncharacterized protein from Haemophilus influenzae (strain ATCC 51907 / DSM 11121 / KW20 / Rd).